A 293-amino-acid chain; its full sequence is Acetylglutamate kinase (293 aa).

Substrate-binding positions include 68-69 (GG), arginine 90, and asparagine 189.

The protein belongs to the acetylglutamate kinase family. ArgB subfamily.

The protein resides in the cytoplasm. The enzyme catalyses N-acetyl-L-glutamate + ATP = N-acetyl-L-glutamyl 5-phosphate + ADP. It functions in the pathway amino-acid biosynthesis; L-arginine biosynthesis; N(2)-acetyl-L-ornithine from L-glutamate: step 2/4. In terms of biological role, catalyzes the ATP-dependent phosphorylation of N-acetyl-L-glutamate. The sequence is that of Acetylglutamate kinase from Mycobacterium ulcerans (strain Agy99).